Reading from the N-terminus, the 447-residue chain is N-succinylarginine dihydrolase (447 aa).

Substrate is bound by residues A19 to S28, N110, and H137 to R138. The active site involves E174. Position 212 (R212) interacts with substrate. H248 is a catalytic residue. 2 residues coordinate substrate: D250 and N359. The Nucleophile role is filled by C365.

The protein belongs to the succinylarginine dihydrolase family. In terms of assembly, homodimer.

It carries out the reaction N(2)-succinyl-L-arginine + 2 H2O + 2 H(+) = N(2)-succinyl-L-ornithine + 2 NH4(+) + CO2. Its pathway is amino-acid degradation; L-arginine degradation via AST pathway; L-glutamate and succinate from L-arginine: step 2/5. In terms of biological role, catalyzes the hydrolysis of N(2)-succinylarginine into N(2)-succinylornithine, ammonia and CO(2). This is N-succinylarginine dihydrolase from Salmonella paratyphi A (strain ATCC 9150 / SARB42).